The chain runs to 463 residues: MGRKKIQITRIMDERNRQVTFTKRKFGLMKKAYELSVLCDCEIALIIFNSTNKLFQYASTDMDKVLLKYTEYNEPHESRTNSDIVEALNKKENKGCESPDPDSSYALTPRTEEKYKKINEEFDNMIKSHKIPAVPPPNFEMPVSIPVSSHNSLVYSNPVSSLGNPNFLPLAHPSLQRNSMSPGVTHRPPSAGNTGGLMGGDLTSGAGTSAGNGYGNPRNSPGLLVSPGNLNKNMQAKSPPPMNLGMNNRKPDLRVLIPPGSKNTMPSVSQRINNSQSAQSLATPVVSVATPTLPGQGMGGYPSAISTTYGTEYSLSSADLSSLSGFNTASALHLGSVTGWQQQHLHNMPPSALSQLGACTSTHLSQSSNLSLPSTQSLNIKSEPVSPPRDRTTTPSRYPQHTRHEAGRSPVDSLSSCSSSYDGSDREDHRNEFHSPIGLTRPSPDERESPSVKRMRLSEGWAT.

Positions 3–57 constitute an MADS-box domain; the sequence is RKKIQITRIMDERNRQVTFTKRKFGLMKKAYELSVLCDCEIALIIFNSTNKLFQY. Lys4 is subject to N6-acetyllysine. The mef2-type DNA-binding region spans 58–86; the sequence is ASTDMDKVLLKYTEYNEPHESRTNSDIVE. Residue Ser59 is modified to Phosphoserine; by CK2. 2 positions are modified to phosphoserine: Ser98 and Ser104. 2 positions are modified to N6-acetyllysine: Lys114 and Lys117. Positions 178-223 are disordered; the sequence is NSMSPGVTHRPPSAGNTGGLMGGDLTSGAGTSAGNGYGNPRNSPGL. Residues Ser220 and Ser226 each carry the phosphoserine modification. 2 positions are modified to N6-acetyllysine: Lys232 and Lys237. A Phosphoserine modification is found at Ser238. Lys250 and Lys262 each carry N6-acetyllysine. Phosphothreonine; by MAPK7 and MAPK14 is present on residues Thr283 and Thr290. The segment at 358 to 389 is transcription repressor; the sequence is ACTSTHLSQSSNLSLPSTQSLNIKSEPVSPPR. The span at 365 to 380 shows a compositional bias: polar residues; that stretch reads SQSSNLSLPSTQSLNI. The segment at 365 to 463 is disordered; that stretch reads SQSSNLSLPS…RMRLSEGWAT (99 aa). Lys381 is covalently cross-linked (Glycyl lysine isopeptide (Lys-Gly) (interchain with G-Cter in SUMO)). Ser386 is subject to Phosphoserine; by CDK5. A Phosphoserine; by MAPK7 modification is found at Ser409. The span at 409–422 shows a compositional bias: low complexity; sequence SPVDSLSSCSSSYD. Over residues 423 to 433 the composition is skewed to basic and acidic residues; it reads GSDREDHRNEF. The residue at position 435 (Ser435) is a Phosphoserine.

Forms a complex with class II HDACs in undifferentiating cells. On myogenic differentiation, HDACs are released into the cytoplasm allowing MEF2s to interact with other proteins for activation. Interacts with EP300 in differentiating cells; the interaction acetylates MEF2C leading to increased DNA binding and activation. Interacts with HDAC7 and CARM1. Interacts with HDAC4, HDAC7 and HDAC9; the interaction with HDACs represses transcriptional activity. Interacts with LPIN1. Interacts with MYOCD. Interacts with AKAP13. Interacts with FOXK1; the interaction inhibits MEF2C transactivation activity. Interacts (via N-terminus) with HABP4; this interaction decreases DNA-binding activity of MEF2C in myocardial cells in response to mechanical stress. Interacts with JPH2; interaction specifically takes place with the Junctophilin-2 N-terminal fragment cleavage product of JPH2. Interacts (via MADS box) with SOX18. Interacts with PHF7; the interaction promotes MEF2C binding to its transcription targets. Phosphorylated on Ser-59; which enhances DNA binding activity. Phosphorylated on Ser-386; which is required for Lys-381 sumoylation and inhibits transcriptional activity. Post-translationally, acetylated by p300 on several sites in diffentiating myocytes. Acetylation on Lys-4 increases DNA binding and transactivation. In terms of processing, sumoylated on Lys-381 with SUMO2 but not SUMO1; which represses transcriptional activity. Proteolytically cleaved in cerebellar granule neurons on several sites by caspase 3 and caspase 7 following neurotoxicity. Preferentially cleaves the CDK5-mediated hyperphosphorylated form which leads to neuron apoptosis and transcriptional inactivation.

It is found in the nucleus. The protein localises to the cytoplasm. It localises to the sarcoplasm. Its function is as follows. Transcription activator which binds specifically to the MEF2 element present in the regulatory regions of many muscle-specific genes. Controls cardiac morphogenesis and myogenesis, and is also involved in vascular development. Enhances transcriptional activation mediated by SOX18. Plays an essential role in hippocampal-dependent learning and memory by suppressing the number of excitatory synapses and thus regulating basal and evoked synaptic transmission. Crucial for normal neuronal development, distribution, and electrical activity in the neocortex. Necessary for proper development of megakaryocytes and platelets and for bone marrow B-lymphopoiesis. Required for B-cell survival and proliferation in response to BCR stimulation, efficient IgG1 antibody responses to T-cell-dependent antigens and for normal induction of germinal center B-cells. May also be involved in neurogenesis and in the development of cortical architecture. The protein is Myocyte-specific enhancer factor 2C of Sus scrofa (Pig).